Here is a 181-residue protein sequence, read N- to C-terminus: Large ribosomal subunit protein uL5c (181 aa).

It belongs to the universal ribosomal protein uL5 family. Part of the 50S ribosomal subunit; contacts the 5S rRNA.

It is found in the plastid. The protein localises to the chloroplast. Functionally, binds 5S rRNA, forms part of the central protuberance of the 50S subunit. This Rhodomonas salina (Cryptomonas salina) protein is Large ribosomal subunit protein uL5c (rpl5).